Consider the following 335-residue polypeptide: Ketol-acid reductoisomerase (NAD(P)(+)) (335 aa).

One can recognise a KARI N-terminal Rossmann domain in the interval 5-185 (AKIYTDKDTT…GGTRAGAIET (181 aa)). NADP(+)-binding positions include 28–31 (YGSQ), arginine 52, serine 56, and 86–89 (DMAQ). Residue histidine 111 is part of the active site. Residue glycine 137 coordinates NADP(+). Positions 186–331 (TFKEETETDL…RRLKEIIERG (146 aa)) constitute a KARI C-terminal knotted domain. Positions 194, 198, 230, and 234 each coordinate Mg(2+). Residue serine 255 coordinates substrate. Residues 301–335 (GSPTLSKGLEEMDKSLEEQTGRRLKEIIERGRPKS) form a disordered region. A compositionally biased stretch (basic and acidic residues) spans 308 to 335 (GLEEMDKSLEEQTGRRLKEIIERGRPKS).

It belongs to the ketol-acid reductoisomerase family. The cofactor is Mg(2+).

It catalyses the reaction (2R)-2,3-dihydroxy-3-methylbutanoate + NAD(+) = (2S)-2-acetolactate + NADH + H(+). The enzyme catalyses (2R)-2,3-dihydroxy-3-methylbutanoate + NADP(+) = (2S)-2-acetolactate + NADPH + H(+). It participates in amino-acid biosynthesis; L-isoleucine biosynthesis; L-isoleucine from 2-oxobutanoate: step 2/4. Its pathway is amino-acid biosynthesis; L-valine biosynthesis; L-valine from pyruvate: step 2/4. In terms of biological role, involved in the biosynthesis of branched-chain amino acids (BCAA). Catalyzes an alkyl-migration followed by a ketol-acid reduction of (S)-2-acetolactate (S2AL) to yield (R)-2,3-dihydroxy-isovalerate. In the isomerase reaction, S2AL is rearranged via a Mg-dependent methyl migration to produce 3-hydroxy-3-methyl-2-ketobutyrate (HMKB). In the reductase reaction, this 2-ketoacid undergoes a metal-dependent reduction by NADPH or NADH to yield (R)-2,3-dihydroxy-isovalerate. The sequence is that of Ketol-acid reductoisomerase (NAD(P)(+)) from Metallosphaera sedula (strain ATCC 51363 / DSM 5348 / JCM 9185 / NBRC 15509 / TH2).